The following is a 356-amino-acid chain: uncharacterized protein (356 aa).

This is an uncharacterized protein from Methanocaldococcus jannaschii (strain ATCC 43067 / DSM 2661 / JAL-1 / JCM 10045 / NBRC 100440) (Methanococcus jannaschii).